Reading from the N-terminus, the 205-residue chain is Protein PYRAB00100 (205 aa).

Residues 7–201 (EWGEFLVRLA…EEYPRGPVRR (195 aa)) form the AMMECR1 domain.

The chain is Protein PYRAB00100 from Pyrococcus abyssi (strain GE5 / Orsay).